A 43-amino-acid polypeptide reads, in one-letter code: Protein PsbN (43 aa).

A helical transmembrane segment spans residues 4–24 (ATFVAIFISCLLISFTGYALY).

This sequence belongs to the PsbN family.

It is found in the plastid. Its subcellular location is the chloroplast thylakoid membrane. Its function is as follows. May play a role in photosystem I and II biogenesis. This chain is Protein PsbN, found in Marchantia polymorpha (Common liverwort).